An 845-amino-acid polypeptide reads, in one-letter code: P protein (845 aa).

The segment at 1–57 (MRLENREGRPTSGVLEMELPQASAPSRAGLGSLGLVGLDSSNHRPQQGGSKAGSRGP) is disordered. At 1-183 (MRLENREGRP…HLSKLRCCVQ (183 aa)) the chain is on the extracellular side. The span at 26 to 40 (SRAGLGSLGLVGLDS) shows a compositional bias: low complexity. A helical membrane pass occupies residues 184–204 (WLKVSGLFVFVVLCSILFSLY). The Cytoplasmic segment spans residues 205 to 337 (PDQGKFWQLL…QYLRASIEAQ (133 aa)). Residues 338 to 358 (VTIAAVILAGVYVLIIFEIVH) traverse the membrane as a helical segment. The Extracellular segment spans residues 359-360 (RT). Residues 361–381 (LAAMLGSLAALAALAVIGDRP) form a helical membrane-spanning segment. The Cytoplasmic segment spans residues 382-393 (TLTQVVEWIDFE). Residues 394-414 (TLALLFGMMILVAIFSETGFF) traverse the membrane as a helical segment. Residues 415 to 429 (DYCAVKAYQLSRGRV) lie on the Extracellular side of the membrane. A helical transmembrane segment spans residues 430–450 (WAMIIMLCLIAAVLSAFLDNV). Topologically, residues 451–513 (TTALLFTPVT…ELRKMGLDFA (63 aa)) are cytoplasmic. The chain crosses the membrane as a helical span at residues 514–534 (GFTAHMFAGICFVLLFSFPLL). Topologically, residues 535–629 (RLLYWNRKLY…KKHRISDRTL (95 aa)) are extracellular. A helical transmembrane segment spans residues 630–650 (LTKCVTVLGLVIFMFFLNSFV). Residue Pro-651 is a topological domain, cytoplasmic. A helical membrane pass occupies residues 652 to 672 (GVHLDLGWIAILGAIWLLILA). Residues 673 to 687 (DIHDFEIILHRVEWA) lie on the Extracellular side of the membrane. The helical transmembrane segment at 688 to 708 (TLLFFAALFILMEALAHLHLI) threads the bilayer. Residues 709–730 (EYVGEQTALLIKMVPEDQRLAA) lie on the Cytoplasmic side of the membrane. A helical membrane pass occupies residues 731-751 (AIIVVVWVSAIASSLIDNIPF). The Extracellular portion of the chain corresponds to 752–773 (TATMIPVLLNLSRDPEISLPAP). A helical membrane pass occupies residues 774–794 (PLMYALALGACLGGNGTLIGA). The Cytoplasmic segment spans residues 795-820 (SANVVCAGIAEQHGYGFSFMEFFRLG). Residues 821–841 (FPMMVVSCMVGMCYLLVAHVV) form a helical membrane-spanning segment. Residues 842–845 (MGWN) are Extracellular-facing.

This sequence belongs to the CitM (TC 2.A.11) transporter family.

It localises to the melanosome membrane. It carries out the reaction chloride(in) = chloride(out). Its function is as follows. Contributes to a melanosome-specific anion (chloride) current that modulates melanosomal pH for optimal tyrosinase activity required for melanogenesis and the melanosome maturation. One of the components of the mammalian pigmentary system. May serve as a key control point at which ethnic skin color variation is determined. Major determinant of brown and/or blue eye color. Seems to regulate the post-translational processing of tyrosinase, which catalyzes the limiting reaction in melanin synthesis. This is P protein (Oca2) from Sus scrofa (Pig).